A 101-amino-acid polypeptide reads, in one-letter code: MMLEHVLVLSAYLFSIGIYGLITSRNMVRALMCLELILNAVNMNLVTFSDFFDNRQLKGNIFSIFVIAIAAAEAAIGPAIVSSISRNRKSIRINQSNLLNK.

Helical transmembrane passes span 2–22, 32–52, and 61–81; these read MLEH…YGLI, MCLE…SDFF, and IFSI…PAIV.

Belongs to the complex I subunit 4L family. NDH is composed of at least 16 different subunits, 5 of which are encoded in the nucleus.

The protein localises to the plastid. Its subcellular location is the chloroplast thylakoid membrane. It catalyses the reaction a plastoquinone + NADH + (n+1) H(+)(in) = a plastoquinol + NAD(+) + n H(+)(out). The enzyme catalyses a plastoquinone + NADPH + (n+1) H(+)(in) = a plastoquinol + NADP(+) + n H(+)(out). Its function is as follows. NDH shuttles electrons from NAD(P)H:plastoquinone, via FMN and iron-sulfur (Fe-S) centers, to quinones in the photosynthetic chain and possibly in a chloroplast respiratory chain. The immediate electron acceptor for the enzyme in this species is believed to be plastoquinone. Couples the redox reaction to proton translocation, and thus conserves the redox energy in a proton gradient. The polypeptide is NAD(P)H-quinone oxidoreductase subunit 4L, chloroplastic (Lotus japonicus (Lotus corniculatus var. japonicus)).